A 415-amino-acid chain; its full sequence is Gamma-glutamyl phosphate reductase (415 aa).

This sequence belongs to the gamma-glutamyl phosphate reductase family.

It is found in the cytoplasm. The enzyme catalyses L-glutamate 5-semialdehyde + phosphate + NADP(+) = L-glutamyl 5-phosphate + NADPH + H(+). It functions in the pathway amino-acid biosynthesis; L-proline biosynthesis; L-glutamate 5-semialdehyde from L-glutamate: step 2/2. Its function is as follows. Catalyzes the NADPH-dependent reduction of L-glutamate 5-phosphate into L-glutamate 5-semialdehyde and phosphate. The product spontaneously undergoes cyclization to form 1-pyrroline-5-carboxylate. This chain is Gamma-glutamyl phosphate reductase, found in Leuconostoc citreum (strain KM20).